The following is a 259-amino-acid chain: LOB domain-containing protein CRL1 (259 aa).

One can recognise an LOB domain in the interval 6-108 (SPCGACKFLR…AQLASLKAAA (103 aa)).

This sequence belongs to the LOB domain-containing protein family. As to quaternary structure, can form homodimers. In terms of tissue distribution, expressed in unelongating basal internodes, at the base of shoot in parenchyma cells adjacent to the peripheral vascular cylinder of the stem, and root pericycle cells. Expressed in lateral and adventitious root primordia, tiller primordia, vascular tissues, scutellum, and young pedicels.

The protein resides in the nucleus. Functionally, acts as a positive regulator of adventitious (crown) root formation by promoting its initiation. Acts as a positive regulator of lateral root formation. Regulated by the auxin response factor and transcriptional activator ARF23/ARF1. Involved in auxin-mediated cell dedifferentiation, and may promote the initial cell division in the pericycle cells adjacent to the peripheral vascular cylinder at the base of the stem. May act upstream of the gene regulatory network controlling adventitious root (crown) development. This Oryza sativa subsp. japonica (Rice) protein is LOB domain-containing protein CRL1.